A 208-amino-acid polypeptide reads, in one-letter code: Small ribosomal subunit protein uS4 (208 aa).

Positions 98–161 constitute an S4 RNA-binding domain; sequence RRLDNVIYRM…KELEIIKESL (64 aa).

This sequence belongs to the universal ribosomal protein uS4 family. In terms of assembly, part of the 30S ribosomal subunit. Contacts protein S5. The interaction surface between S4 and S5 is involved in control of translational fidelity.

One of the primary rRNA binding proteins, it binds directly to 16S rRNA where it nucleates assembly of the body of the 30S subunit. Its function is as follows. With S5 and S12 plays an important role in translational accuracy. The protein is Small ribosomal subunit protein uS4 of Thermodesulfovibrio yellowstonii (strain ATCC 51303 / DSM 11347 / YP87).